The following is a 303-amino-acid chain: Ribosomal protein uL3 glutamine methyltransferase (303 aa).

This sequence belongs to the protein N5-glutamine methyltransferase family. PrmB subfamily.

It catalyses the reaction L-glutaminyl-[ribosomal protein uL3] + S-adenosyl-L-methionine = N(5)-methyl-L-glutaminyl-[ribosomal protein uL3] + S-adenosyl-L-homocysteine + H(+). Methylates large ribosomal subunit protein uL3 on a specific glutamine residue. The sequence is that of Ribosomal protein uL3 glutamine methyltransferase from Neisseria meningitidis serogroup A / serotype 4A (strain DSM 15465 / Z2491).